Here is a 1933-residue protein sequence, read N- to C-terminus: Protein TIC 214 (1933 aa).

Transmembrane regions (helical) follow at residues 18–38, 60–80, 87–107, 128–148, 176–196, and 230–250; these read IVNS…FSIG, ATTG…YAPL, PHTI…FYTD, FSIQ…HFIL, VGWL…LVWI, and IFYI…PAPL. 4 disordered regions span residues 266–291, 473–514, 808–832, and 1066–1121; these read AKGK…VGVG, KTKS…SRDN, THRE…AEDP, and ESFT…SSNA. Positions 278–289 are enriched in acidic residues; it reads EEGDVEKEDEVG. Residues 476-487 show a composition bias toward polar residues; it reads SLSPEKTSGDNL. Basic and acidic residues-rich tracts occupy residues 488 to 514 and 819 to 832; these read ETSR…SRDN and DEKN…AEDP. The segment covering 1066–1078 has biased composition (polar residues); sequence ESFTQISSPSSTN. The segment covering 1105–1115 has biased composition (basic residues); that stretch reads KEKKKKKRSLK. Residues 1135–1155 traverse the membrane as a helical segment; the sequence is LPVYLKLFIQRIYTGIFFSII. The segment at 1562–1642 is disordered; that stretch reads NADNEKNEKK…SAESTTKKVT (81 aa). Basic and acidic residues predominate over residues 1564 to 1642; it reads DNEKNEKKEA…SAESTTKKVT (79 aa).

The protein belongs to the TIC214 family. Part of the Tic complex.

Its subcellular location is the plastid. The protein localises to the chloroplast inner membrane. Involved in protein precursor import into chloroplasts. May be part of an intermediate translocation complex acting as a protein-conducting channel at the inner envelope. The polypeptide is Protein TIC 214 (Jasminum nudiflorum (Winter jasmine)).